The chain runs to 336 residues: Ferredoxin--NADP reductase 1 (336 aa).

Positions 37, 45, 50, 90, 125, 287, and 328 each coordinate FAD.

Belongs to the ferredoxin--NADP reductase type 2 family. Homodimer. It depends on FAD as a cofactor.

The catalysed reaction is 2 reduced [2Fe-2S]-[ferredoxin] + NADP(+) + H(+) = 2 oxidized [2Fe-2S]-[ferredoxin] + NADPH. The protein is Ferredoxin--NADP reductase 1 (ycgT) of Bacillus subtilis (strain 168).